The sequence spans 102 residues: Aspartyl/glutamyl-tRNA(Asn/Gln) amidotransferase subunit C (102 aa).

Belongs to the GatC family. As to quaternary structure, heterotrimer of A, B and C subunits.

The enzyme catalyses L-glutamyl-tRNA(Gln) + L-glutamine + ATP + H2O = L-glutaminyl-tRNA(Gln) + L-glutamate + ADP + phosphate + H(+). It catalyses the reaction L-aspartyl-tRNA(Asn) + L-glutamine + ATP + H2O = L-asparaginyl-tRNA(Asn) + L-glutamate + ADP + phosphate + 2 H(+). In terms of biological role, allows the formation of correctly charged Asn-tRNA(Asn) or Gln-tRNA(Gln) through the transamidation of misacylated Asp-tRNA(Asn) or Glu-tRNA(Gln) in organisms which lack either or both of asparaginyl-tRNA or glutaminyl-tRNA synthetases. The reaction takes place in the presence of glutamine and ATP through an activated phospho-Asp-tRNA(Asn) or phospho-Glu-tRNA(Gln). This chain is Aspartyl/glutamyl-tRNA(Asn/Gln) amidotransferase subunit C, found in Bordetella bronchiseptica (strain ATCC BAA-588 / NCTC 13252 / RB50) (Alcaligenes bronchisepticus).